Reading from the N-terminus, the 366-residue chain is tRNA/tmRNA (uracil-C(5))-methyltransferase (366 aa).

S-adenosyl-L-methionine contacts are provided by glutamine 190, tyrosine 218, asparagine 223, glutamate 239, and aspartate 299. Cysteine 324 functions as the Nucleophile in the catalytic mechanism. The active-site Proton acceptor is the glutamate 358.

Belongs to the class I-like SAM-binding methyltransferase superfamily. RNA M5U methyltransferase family. TrmA subfamily.

The catalysed reaction is uridine(54) in tRNA + S-adenosyl-L-methionine = 5-methyluridine(54) in tRNA + S-adenosyl-L-homocysteine + H(+). The enzyme catalyses uridine(341) in tmRNA + S-adenosyl-L-methionine = 5-methyluridine(341) in tmRNA + S-adenosyl-L-homocysteine + H(+). Functionally, dual-specificity methyltransferase that catalyzes the formation of 5-methyluridine at position 54 (m5U54) in all tRNAs, and that of position 341 (m5U341) in tmRNA (transfer-mRNA). This chain is tRNA/tmRNA (uracil-C(5))-methyltransferase, found in Salmonella agona (strain SL483).